Consider the following 346-residue polypeptide: Putative alpha/beta hydrolase R526 (346 aa).

Belongs to the AB hydrolase 3 family.

The protein resides in the virion. In Acanthamoeba polyphaga mimivirus (APMV), this protein is Putative alpha/beta hydrolase R526.